A 397-amino-acid chain; its full sequence is Corticosteroid-binding globulin (397 aa).

An N-terminal signal peptide occupies residues 1-22 (MSLALYTCLFWLCTSGLWTTQA). 4 N-linked (GlcNAc...) asparagine glycosylation sites follow: asparagine 89, asparagine 169, asparagine 217, and asparagine 232. Glutamine 247 is a cortisol binding site. Asparagine 253 carries an N-linked (GlcNAc...) asparagine glycan. Aspartate 279 serves as a coordination point for cortisol. N-linked (GlcNAc...) asparagine glycosylation occurs at asparagine 320. Residue tryptophan 385 participates in cortisol binding.

This sequence belongs to the serpin family. In terms of tissue distribution, expressed by the liver; secreted in plasma.

It is found in the secreted. Its function is as follows. Major transport protein for glucocorticoids and progestins in the blood of almost all vertebrate species. The chain is Corticosteroid-binding globulin (Serpina6) from Mus musculus (Mouse).